A 1536-amino-acid chain; its full sequence is Ferredoxin-dependent glutamate synthase (1536 aa).

The active-site For GATase activity is cysteine 27. A Glutamine amidotransferase type-2 domain is found at 27-427 (CGVGFIANLN…PGQMLCVDLS (401 aa)). Residue 1105–1162 (LAEVHTTLVENSLREKVILRVDGGLRTGKDIIIAALMGAEEFGFGTVAMIATGCVMAR) coordinates FMN. Residues cysteine 1158, cysteine 1164, and cysteine 1169 each contribute to the [3Fe-4S] cluster site.

It belongs to the glutamate synthase family. As to quaternary structure, monomer. The cofactor is [3Fe-4S] cluster. Requires FAD as cofactor. It depends on FMN as a cofactor.

Its subcellular location is the plastid. The protein resides in the chloroplast stroma. The enzyme catalyses 2 oxidized [2Fe-2S]-[ferredoxin] + 2 L-glutamate = L-glutamine + 2 reduced [2Fe-2S]-[ferredoxin] + 2-oxoglutarate + 2 H(+). It functions in the pathway amino-acid biosynthesis; L-glutamate biosynthesis via GLT pathway; L-glutamate from 2-oxoglutarate and L-glutamine (ferredoxin route): step 1/1. The protein operates within energy metabolism; nitrogen metabolism. This Antithamnion sp. (Red alga) protein is Ferredoxin-dependent glutamate synthase (gltB).